Here is a 539-residue protein sequence, read N- to C-terminus: Berberine bridge enzyme-like 21 (539 aa).

Residues 1–26 (MIATQTFVSVFFFVFFLVSLPFFSSA) form the signal peptide. Cys41 and Cys104 form a disulfide bridge. Asn79 is a glycosylation site (N-linked (GlcNAc...) asparagine). Positions 82–256 (STPKPAIIVT…LGYKVKLVPV (175 aa)) constitute an FAD-binding PCMH-type domain. Residues 119–181 (HDYEGLSYIS…KVHGFPAGVC (63 aa)) constitute a cross-link (6-(S-cysteinyl)-8alpha-(pros-histidyl)-FAD (His-Cys)). N-linked (GlcNAc...) asparagine glycosylation occurs at Asn340.

The protein belongs to the oxygen-dependent FAD-linked oxidoreductase family. It depends on FAD as a cofactor. In terms of processing, the FAD cofactor is bound via a bicovalent 6-S-cysteinyl, 8alpha-N1-histidyl FAD linkage.

Its subcellular location is the secreted. It is found in the cell wall. In Arabidopsis thaliana (Mouse-ear cress), this protein is Berberine bridge enzyme-like 21.